The primary structure comprises 142 residues: Protein lin-32 (142 aa).

The segment covering 30 to 48 (PLQSPNFSLDSPNYPDSLS) has biased composition (polar residues). Positions 30-66 (PLQSPNFSLDSPNYPDSLSNGGGKDDKKKCRRYKTPS) are disordered. One can recognise a bHLH domain in the interval 72-124 (MRRSAANERERRRMNTLNVAYDELREVLPEIDSGKKLSKFETLQMAQKYIECL).

Forms a heterodimer with hlh-2. As to expression, expressed in PVD motor neurons.

The protein resides in the nucleus. In terms of biological role, probable transcription factor which binds the E box motif 5'-CA[TC][AG]TG-3'. Essential for the specification of the neuroblast cell fate in the development of peripheral sense organs. Its role in the generation of sensory neurons may be through positively regulating the expression of the zinc finger protein ztf-11 during postdeirid neurogenesis. Required for specification of cell fate, acting in concert with lin-32, in the development of the male-specific genital sensilla (simple sense organs) known as rays. Involved in regulating glial specification, perhaps by suppressing a glial fate in different lineages during early embryogenesis. The sequence is that of Protein lin-32 from Caenorhabditis elegans.